Here is a 197-residue protein sequence, read N- to C-terminus: UPF0301 protein AnaeK_4073 (197 aa).

The protein belongs to the UPF0301 (AlgH) family.

This Anaeromyxobacter sp. (strain K) protein is UPF0301 protein AnaeK_4073.